The sequence spans 111 residues: uncharacterized protein (111 aa).

The interval 43-72 is disordered; the sequence is NGRAEETEADAPLPEEPSLPDLPDLSDLDS. Over residues 61–72 the composition is skewed to low complexity; the sequence is LPDLPDLSDLDS.

This is an uncharacterized protein from Homo sapiens (Human).